We begin with the raw amino-acid sequence, 263 residues long: Small ribosomal subunit protein eS4 (263 aa).

An S4 RNA-binding domain is found at 42-104 (LPLIVFLRNR…TGEHFRLVYD (63 aa)).

The protein belongs to the eukaryotic ribosomal protein eS4 family.

This is Small ribosomal subunit protein eS4 (RPS4Y1) from Pongo pygmaeus (Bornean orangutan).